We begin with the raw amino-acid sequence, 377 residues long: N5-carboxyaminoimidazole ribonucleotide synthase (377 aa).

ATP-binding positions include Arg-93, Lys-133, 138–144, 175–178, Glu-183, His-206, and 257–258; these read GYDGKGQ, EEFV, and NE. Residues 97–287 form the ATP-grasp domain; that stretch reads KALLDNAGVR…QFENHLRAVC (191 aa).

It belongs to the PurK/PurT family. Homodimer.

It carries out the reaction 5-amino-1-(5-phospho-beta-D-ribosyl)imidazole + hydrogencarbonate + ATP = 5-carboxyamino-1-(5-phospho-D-ribosyl)imidazole + ADP + phosphate + 2 H(+). It participates in purine metabolism; IMP biosynthesis via de novo pathway; 5-amino-1-(5-phospho-D-ribosyl)imidazole-4-carboxylate from 5-amino-1-(5-phospho-D-ribosyl)imidazole (N5-CAIR route): step 1/2. Its function is as follows. Catalyzes the ATP-dependent conversion of 5-aminoimidazole ribonucleotide (AIR) and HCO(3)(-) to N5-carboxyaminoimidazole ribonucleotide (N5-CAIR). The chain is N5-carboxyaminoimidazole ribonucleotide synthase from Vibrio parahaemolyticus serotype O3:K6 (strain RIMD 2210633).